The primary structure comprises 292 residues: Glycine--tRNA ligase alpha subunit (292 aa).

Belongs to the class-II aminoacyl-tRNA synthetase family. In terms of assembly, tetramer of two alpha and two beta subunits.

The protein localises to the cytoplasm. It carries out the reaction tRNA(Gly) + glycine + ATP = glycyl-tRNA(Gly) + AMP + diphosphate. This is Glycine--tRNA ligase alpha subunit from Synechococcus elongatus (strain ATCC 33912 / PCC 7942 / FACHB-805) (Anacystis nidulans R2).